Here is a 267-residue protein sequence, read N- to C-terminus: 3-oxoadipate enol-lactonase 2 (267 aa).

It carries out the reaction (4,5-dihydro-5-oxofuran-2-yl)-acetate + H2O = 3-oxoadipate + H(+). It participates in aromatic compound metabolism; beta-ketoadipate pathway; 3-oxoadipate from 5-oxo-4,5-dihydro-2-furylacetate: step 1/1. This chain is 3-oxoadipate enol-lactonase 2 (catD), found in Acinetobacter baylyi (strain ATCC 33305 / BD413 / ADP1).